The chain runs to 117 residues: MNLSRNKARKVKQKRLRAKSELSRAASKPRLSVFKSHANFYAQLIDDQKRVTLASVSSLKSGKYGGNVAAAKELGLLMGQKILDLKLETVAFDRNGYLYHGRVKAFADAVREKGVKF.

Residues 1–17 (MNLSRNKARKVKQKRLR) are compositionally biased toward basic residues. The disordered stretch occupies residues 1 to 23 (MNLSRNKARKVKQKRLRAKSELS).

This sequence belongs to the universal ribosomal protein uL18 family. Part of the 50S ribosomal subunit; part of the 5S rRNA/L5/L18/L25 subcomplex. Contacts the 5S and 23S rRNAs.

Functionally, this is one of the proteins that bind and probably mediate the attachment of the 5S RNA into the large ribosomal subunit, where it forms part of the central protuberance. This is Large ribosomal subunit protein uL18 from Mycoplasmopsis synoviae (strain 53) (Mycoplasma synoviae).